The sequence spans 730 residues: Exostosin-1a (730 aa).

Over 1 to 6 the chain is Cytoplasmic; that stretch reads MQAKKR. A helical; Signal-anchor for type II membrane protein transmembrane segment spans residues 7 to 27; that stretch reads YLILFSAGVCLILLFYLQGPA. Residues 28–730 are Lumenal-facing; the sequence is SRRTPKRGDD…RKKYRDIERL (703 aa). Residue Asn-314 is glycosylated (N-linked (GlcNAc...) asparagine). UDP-N-acetyl-alpha-D-glucosamine-binding residues include Arg-533, Asp-549, Glu-550, Asp-551, Glu-637, Asp-638, and Arg-685. Asp-551 is a Mn(2+) binding site. The cysteines at positions 636 and 688 are disulfide-linked. Residue Asp-638 is part of the active site.

The protein belongs to the glycosyltransferase 47 family. Mn(2+) is required as a cofactor.

It is found in the endoplasmic reticulum membrane. The enzyme catalyses 3-O-{[(1-&gt;4)-beta-D-GlcA-(1-&gt;4)-alpha-D-GlcNAc](n)-(1-&gt;4)-beta-D-GlcA-(1-&gt;3)-beta-D-Gal-(1-&gt;3)-beta-D-Gal-(1-&gt;4)-beta-D-Xyl}-L-seryl-[protein] + UDP-N-acetyl-alpha-D-glucosamine = 3-O-{alpha-D-GlcNAc-[(1-&gt;4)-beta-D-GlcA-(1-&gt;4)-alpha-D-GlcNAc](n)-(1-&gt;4)-beta-D-GlcA-(1-&gt;3)-beta-D-Gal-(1-&gt;3)-beta-D-Gal-(1-&gt;4)-beta-D-Xyl}-L-seryl-[protein] + UDP + H(+). The catalysed reaction is 3-O-{alpha-D-GlcNAc-[(1-&gt;4)-beta-D-GlcA-(1-&gt;4)-alpha-D-GlcNAc](n)-(1-&gt;4)-beta-D-GlcA-(1-&gt;3)-beta-D-Gal-(1-&gt;3)-beta-D-Gal-(1-&gt;4)-beta-D-Xyl}-L-seryl-[protein] + UDP-alpha-D-glucuronate = 3-O-{[(1-&gt;4)-beta-D-GlcA-(1-&gt;4)-alpha-D-GlcNAc](n+1)-(1-&gt;4)-beta-D-GlcA-(1-&gt;3)-beta-D-Gal-(1-&gt;3)-beta-D-Gal-(1-&gt;4)-beta-D-Xyl}-L-seryl-[protein] + UDP + H(+). It functions in the pathway protein modification; protein glycosylation. Glycosyltransferase required for the biosynthesis of heparan-sulfate. This Danio rerio (Zebrafish) protein is Exostosin-1a (ext1a).